The sequence spans 680 residues: MESSSSSNSYFSVGPTSPSAVVLLYSKELKKWDEFEDILEERRHVSDLKFAMKCYTPLVYKGITPCKPIDIKCSVLNSEEIHYVIKQLSKESLQSVDVLREEVSEILDEMSHKLRLGAIRFCAFTLSKVFKQIFSKVCVNEEGIQKLQRAIQEHPVVLLPSHRSYIDFLMLSFLLYNYDLPVPVIAAGMDFLGMKMVGELLRMSGAFFMRRTFGGNKLYWAVFSEYVKTMLRNGYAPVEFFLEGTRSRSAKTLTPKFGLLNIVMEPFFKREVFDTYLVPISISYDKILEETLYVYELLGVPKPKESTTGLLKARKILSENFGSIHVYFGDPVSLRSLAAGRMSRSSYNLVPRYIPQKQSEDMHAFVTEVAYKMELLQIENMVLSPWTLIVAVLLQNRPSMDFDALVEKTLWLKGLTQAFGGFLIWPDNKPAEEVVPASILLHSNIASLVKDQVILKVDSGDSEVVDGLMLQHITLLMCSAYRNQLLNIFVRPSLVAVALQMTPGFRKEDVYSCFRFLRDVFADEFIFLPGNTLKDFEEGCYLLCKSEAIQVTTKDILVTEKGNTVLEFLVGLFKPFVESYQIICKYLLSEEEDHFSEEQYLAAVRKFTSQLLDQGTSQCYDVLSSDVQKNALAACVRLGVVEKKKINNNCIFNVNEPATTKLEEMLGCKTPIGKPATAKL.

Phosphoserine occurs at positions 12 and 17. The HXXXXD motif motif lies at 162 to 167; sequence HRSYID. An N6-acetyllysine modification is found at K643. The Microbody targeting signal signature appears at 678–680; sequence AKL.

It belongs to the GPAT/DAPAT family. As to quaternary structure, part of a heterotrimeric complex composed of GNPAT, AGPS and a modified form of GNPAT.

The protein resides in the peroxisome membrane. It catalyses the reaction dihydroxyacetone phosphate + an acyl-CoA = a 1-acylglycerone 3-phosphate + CoA. The enzyme catalyses dihydroxyacetone phosphate + hexadecanoyl-CoA = 1-hexadecanoylglycerone 3-phosphate + CoA. Its pathway is membrane lipid metabolism; glycerophospholipid metabolism. Dihydroxyacetonephosphate acyltransferase catalyzing the first step in the biosynthesis of plasmalogens, a subset of phospholipids that differ from other glycerolipids by having an alkyl chain attached through a vinyl ether linkage at the sn-1 position of the glycerol backbone, and which unique physical properties have an impact on various aspects of cell signaling and membrane biology. This is Dihydroxyacetone phosphate acyltransferase from Homo sapiens (Human).